Consider the following 1011-residue polypeptide: Translation initiation factor IF-2 (1011 aa).

Over residues 49–77 (YIHEHGTEESPRRRSAGEDEFKPKIDLSK) the composition is skewed to basic and acidic residues. Disordered stretches follow at residues 49–152 (YIHE…RFIT) and 187–407 (AAPA…LSLS). Residues 93 to 104 (APPPPPPPPPRP) show a composition bias toward pro residues. Residues 105–115 (AVKAPSPVSQE) are compositionally biased toward low complexity. Residues 116–126 (PRPPAVPPAPQ) show a composition bias toward pro residues. Low complexity-rich tracts occupy residues 187-212 (AAPA…KAPV) and 228-242 (TAKP…AATP). 2 stretches are compositionally biased toward pro residues: residues 243–252 (APTPGRPLPG) and 276–290 (SAPP…PPPQ). The span at 316 to 329 (GPGGGSGGPGGFQR) shows a compositional bias: gly residues. Over residues 361 to 380 (LAPPGAPANKPAGRPAPARR) the composition is skewed to low complexity. In terms of domain architecture, tr-type G spans 502-678 (VRPPVVTIMG…CLVADLGDLK (177 aa)). A G1 region spans residues 511 to 518 (GHVDHGKT). 511–518 (GHVDHGKT) serves as a coordination point for GTP. The segment at 536 to 540 (GITQH) is G2. The segment at 564 to 567 (DTPG) is G3. GTP is bound by residues 564–568 (DTPGH) and 618–621 (NKID). The tract at residues 618-621 (NKID) is G4. The tract at residues 654 to 656 (SAK) is G5.

Belongs to the TRAFAC class translation factor GTPase superfamily. Classic translation factor GTPase family. IF-2 subfamily.

It is found in the cytoplasm. Its function is as follows. One of the essential components for the initiation of protein synthesis. Protects formylmethionyl-tRNA from spontaneous hydrolysis and promotes its binding to the 30S ribosomal subunits. Also involved in the hydrolysis of GTP during the formation of the 70S ribosomal complex. The sequence is that of Translation initiation factor IF-2 from Koribacter versatilis (strain Ellin345).